Reading from the N-terminus, the 400-residue chain is MGILVIFMKFFNREKEIHKILSIIEGEPNLIYFIYGSINSGKTALINEIINNRLDKNKYIVFYFDLREIFISKYDDFIEVLFEEYEGDKSPIEVIKAIINDLPSLYGIPIPKNTLNEIFKKKTTKNVFRYITNVLMDIKREGKQPIIIIDELQKIGDMKINGFLIYELFNYFVSLTKHKHLCHVFCLSSDSLFIERVYNEAMLEDRVDYILVDDHRGGYAPSIGILPQIESGVAFGNPALEYSNRGFASMRGEYILVDDFDKETALKFMDFLAKENNMSLTNEDKELIYNYVGGKPVLIIKVIDKLRYENLNDILDFMLKDATQKLKYFLEDVKEEDEELYKKVVDALKLFKEDYEIEDIKIPKKIREFLIKRNILFLNPIEGILKPQSFLVWNAIKKVL.

36–43 serves as a coordination point for ATP; sequence GSINSGKT.

This sequence belongs to the archaeal ATPase family.

This is an uncharacterized protein from Methanocaldococcus jannaschii (strain ATCC 43067 / DSM 2661 / JAL-1 / JCM 10045 / NBRC 100440) (Methanococcus jannaschii).